A 697-amino-acid polypeptide reads, in one-letter code: MARRAKKMASNSGDSSPEPGIKEINETWKGAIACLGVALLFLMTIGVLYWQVVEKPDTNWVLRGQVSGLVWDKKSLSFSFKSLSQDKTFARIDARHLPVRGGALLNNHCWFNTTRFCHTWDGVANLQVTLDTPNQSVAECYRVEWTPLNCQVALQDCFSMVNTSWYGGGSMRLQYWPINNANINSQPFVISDLQDTPTGYGSVLERYFLGSTGVAVRVHQEVPLHVGIESRKQLCLGIPPNAEMQPLRYTICVSDSLRSAHQQFGTVIPVVQPDQPDTSILRLPHWRSQRVADIALKLEHNLKTFTRKLKLHRLGEGIMDLGEQSTLLLSNEVDETLQSQNRYRGLRQLRLSITLSPFTSIDSHHFQTTLQEGRENLWLGLPSAANGSQGPLLMKWKGKFAVKLNISNEEAQDWFIEQVHSLQRRLEVDYVNLEVGVGSPYVGQAQHHSCRLCGDDYINQFALLAEKLGNGTTVSAATRTAHLPVFVRMVPRQSDWSHAGLKGLIPSILHYSLLGYSFFIPDVIGGSLTDGFLADEELFVRWMQIATFLPVMSFSTPPWVFGETWIVNVTRSCIHRHQTFVVPLLMKYAAEWTSLGHPVFRPLWWVSPSDPNTFTINDEFLIGDEVLVAPVTESGKVHRDIYLPGNSFQWKDMNTAQVFEGGTLLREYPVALTEVAVFIRQKSKYTPAIAEIQQATT.

Residues 1 to 20 are disordered; it reads MARRAKKMASNSGDSSPEPG. Residues 2 to 29 are Cytoplasmic-facing; that stretch reads ARRAKKMASNSGDSSPEPGIKEINETWK. Residues 30–50 traverse the membrane as a helical segment; it reads GAIACLGVALLFLMTIGVLYW. Residues Asn112, Asn134, Asn162, Asn386, Asn405, and Asn470 are each glycosylated (N-linked (GlcNAc...) asparagine). Helical transmembrane passes span 503–521 and 542–562; these read GLIPSILHYSLLGYSFFIP and WMQIATFLPVMSFSTPPWVFG. N-linked (GlcNAc...) asparagine glycosylation occurs at Asn568.

It belongs to the glycosyl hydrolase 31 family. In terms of assembly, homodimer; disulfide-linked. In terms of tissue distribution, electroplax tissue, brain (200-fold less), and heart (500-fold less).

The protein resides in the membrane. This glycoprotein is probably not a functional part of the chloride channel. In Tetronarce californica (Pacific electric ray), this protein is SITS-binding protein.